Here is a 328-residue protein sequence, read N- to C-terminus: Tryptophan--tRNA ligase (328 aa).

ATP-binding positions include 9 to 11 (QPS) and 17 to 18 (GN). The 'HIGH' region signature appears at 10-18 (PSGVITIGN). Position 132 (Asp132) interacts with L-tryptophan. Residues 144–146 (GED), Ile183, and 192–196 (KMSKS) contribute to the ATP site. The 'KMSKS' region signature appears at 192-196 (KMSKS).

The protein belongs to the class-I aminoacyl-tRNA synthetase family. As to quaternary structure, homodimer.

The protein resides in the cytoplasm. The catalysed reaction is tRNA(Trp) + L-tryptophan + ATP = L-tryptophyl-tRNA(Trp) + AMP + diphosphate + H(+). With respect to regulation, inhibited by indolmycin, a competitive inhibitor for tryptophan. Its function is as follows. Catalyzes the attachment of tryptophan to tRNA(Trp). In Geobacillus stearothermophilus (Bacillus stearothermophilus), this protein is Tryptophan--tRNA ligase.